We begin with the raw amino-acid sequence, 449 residues long: Glutamyl-tRNA reductase (449 aa).

Residues 58 to 61, serine 121, 126 to 128, and glutamine 132 contribute to the substrate site; these read TCNR and ETQ. Cysteine 59 acts as the Nucleophile in catalysis. 203–208 contributes to the NADP(+) binding site; sequence GLGEMA.

Belongs to the glutamyl-tRNA reductase family. In terms of assembly, homodimer.

The enzyme catalyses (S)-4-amino-5-oxopentanoate + tRNA(Glu) + NADP(+) = L-glutamyl-tRNA(Glu) + NADPH + H(+). The protein operates within porphyrin-containing compound metabolism; protoporphyrin-IX biosynthesis; 5-aminolevulinate from L-glutamyl-tRNA(Glu): step 1/2. In terms of biological role, catalyzes the NADPH-dependent reduction of glutamyl-tRNA(Glu) to glutamate 1-semialdehyde (GSA). The protein is Glutamyl-tRNA reductase of Helicobacter pylori (strain P12).